The primary structure comprises 270 residues: Undecaprenyl-diphosphatase (270 aa).

The next 7 membrane-spanning stretches (helical) occupy residues threonine 3–serine 23, tryptophan 42–tryptophan 62, leucine 86–valine 106, leucine 108–isoleucine 128, alanine 184–leucine 204, valine 217–isoleucine 237, and phenylalanine 249–methionine 269.

This sequence belongs to the UppP family.

It localises to the cell inner membrane. It catalyses the reaction di-trans,octa-cis-undecaprenyl diphosphate + H2O = di-trans,octa-cis-undecaprenyl phosphate + phosphate + H(+). Catalyzes the dephosphorylation of undecaprenyl diphosphate (UPP). Confers resistance to bacitracin. The chain is Undecaprenyl-diphosphatase from Novosphingobium aromaticivorans (strain ATCC 700278 / DSM 12444 / CCUG 56034 / CIP 105152 / NBRC 16084 / F199).